Here is a 245-residue protein sequence, read N- to C-terminus: Ribosomal RNA small subunit methyltransferase G (245 aa).

S-adenosyl-L-methionine-binding positions include G90, L95, 140-141 (AE), and R158. Residues 223–245 (VVSARRAKPPHPKSARTGKAGTR) form a disordered region. Residues 227-245 (RRAKPPHPKSARTGKAGTR) are compositionally biased toward basic residues.

This sequence belongs to the methyltransferase superfamily. RNA methyltransferase RsmG family.

Its subcellular location is the cytoplasm. Specifically methylates the N7 position of guanine in position 518 of 16S rRNA. The protein is Ribosomal RNA small subunit methyltransferase G of Mycobacterium avium (strain 104).